We begin with the raw amino-acid sequence, 434 residues long: 5-methylthioadenosine/S-adenosylhomocysteine deaminase (434 aa).

Zn(2+) contacts are provided by His66 and His68. Glu95, Arg148, and His188 together coordinate substrate. Residue His215 participates in Zn(2+) binding. The substrate site is built by Glu218 and Asp304. Position 304 (Asp304) interacts with Zn(2+).

It belongs to the metallo-dependent hydrolases superfamily. MTA/SAH deaminase family. It depends on Zn(2+) as a cofactor.

The enzyme catalyses S-adenosyl-L-homocysteine + H2O + H(+) = S-inosyl-L-homocysteine + NH4(+). It catalyses the reaction S-methyl-5'-thioadenosine + H2O + H(+) = S-methyl-5'-thioinosine + NH4(+). In terms of biological role, catalyzes the deamination of 5-methylthioadenosine and S-adenosyl-L-homocysteine into 5-methylthioinosine and S-inosyl-L-homocysteine, respectively. Is also able to deaminate adenosine. This is 5-methylthioadenosine/S-adenosylhomocysteine deaminase from Shouchella clausii (strain KSM-K16) (Alkalihalobacillus clausii).